Reading from the N-terminus, the 170-residue chain is Peptide deformylase (170 aa).

The Fe cation site is built by cysteine 92 and histidine 134. The active site involves glutamate 135. Histidine 138 serves as a coordination point for Fe cation.

It belongs to the polypeptide deformylase family. The cofactor is Fe(2+).

The catalysed reaction is N-terminal N-formyl-L-methionyl-[peptide] + H2O = N-terminal L-methionyl-[peptide] + formate. In terms of biological role, removes the formyl group from the N-terminal Met of newly synthesized proteins. Requires at least a dipeptide for an efficient rate of reaction. N-terminal L-methionine is a prerequisite for activity but the enzyme has broad specificity at other positions. In Chromohalobacter salexigens (strain ATCC BAA-138 / DSM 3043 / CIP 106854 / NCIMB 13768 / 1H11), this protein is Peptide deformylase.